Consider the following 376-residue polypeptide: Chaperone protein DnaJ (376 aa).

A J domain is found at 5 to 70 (DYYEILGVSK…QKRAAYDQYG (66 aa)). Residues 131–209 (GVTKEIRIPT…CHGHGRVERS (79 aa)) form a CR-type zinc finger. Zn(2+) is bound by residues cysteine 144, cysteine 147, cysteine 161, cysteine 164, cysteine 183, cysteine 186, cysteine 197, and cysteine 200. 4 CXXCXGXG motif repeats span residues 144–151 (CDVCHGSG), 161–168 (CPTCHGSG), 183–190 (CPHCQGRG), and 197–204 (CNKCHGHG).

It belongs to the DnaJ family. In terms of assembly, homodimer. It depends on Zn(2+) as a cofactor.

The protein localises to the cytoplasm. Functionally, participates actively in the response to hyperosmotic and heat shock by preventing the aggregation of stress-denatured proteins and by disaggregating proteins, also in an autonomous, DnaK-independent fashion. Unfolded proteins bind initially to DnaJ; upon interaction with the DnaJ-bound protein, DnaK hydrolyzes its bound ATP, resulting in the formation of a stable complex. GrpE releases ADP from DnaK; ATP binding to DnaK triggers the release of the substrate protein, thus completing the reaction cycle. Several rounds of ATP-dependent interactions between DnaJ, DnaK and GrpE are required for fully efficient folding. Also involved, together with DnaK and GrpE, in the DNA replication of plasmids through activation of initiation proteins. The sequence is that of Chaperone protein DnaJ from Shigella flexneri.